Here is a 373-residue protein sequence, read N- to C-terminus: Carbamoyl phosphate synthase small chain (373 aa).

The tract at residues 1-179 is CPSase; it reads MSGKAQLVLE…AYIVEPEGPP (179 aa). Positions 47, 230, and 232 each coordinate L-glutamine. The region spanning 182–373 is the Glutamine amidotransferase type-1 domain; that stretch reads TVAALDLGIK…QFIELMEGDR (192 aa). The active-site Nucleophile is cysteine 258. Positions 259, 262, 300, 302, and 303 each coordinate L-glutamine. Catalysis depends on residues histidine 348 and glutamate 350.

This sequence belongs to the CarA family. As to quaternary structure, composed of two chains; the small (or glutamine) chain promotes the hydrolysis of glutamine to ammonia, which is used by the large (or ammonia) chain to synthesize carbamoyl phosphate. Tetramer of heterodimers (alpha,beta)4.

It carries out the reaction hydrogencarbonate + L-glutamine + 2 ATP + H2O = carbamoyl phosphate + L-glutamate + 2 ADP + phosphate + 2 H(+). The catalysed reaction is L-glutamine + H2O = L-glutamate + NH4(+). It participates in amino-acid biosynthesis; L-arginine biosynthesis; carbamoyl phosphate from bicarbonate: step 1/1. It functions in the pathway pyrimidine metabolism; UMP biosynthesis via de novo pathway; (S)-dihydroorotate from bicarbonate: step 1/3. In terms of biological role, small subunit of the glutamine-dependent carbamoyl phosphate synthetase (CPSase). CPSase catalyzes the formation of carbamoyl phosphate from the ammonia moiety of glutamine, carbonate, and phosphate donated by ATP, constituting the first step of 2 biosynthetic pathways, one leading to arginine and/or urea and the other to pyrimidine nucleotides. The small subunit (glutamine amidotransferase) binds and cleaves glutamine to supply the large subunit with the substrate ammonia. In Mycolicibacterium paratuberculosis (strain ATCC BAA-968 / K-10) (Mycobacterium paratuberculosis), this protein is Carbamoyl phosphate synthase small chain.